Reading from the N-terminus, the 215-residue chain is Ribonuclease HII (215 aa).

The RNase H type-2 domain maps to 19–213 (QTVAGVDEVG…SLRQPSQQID (195 aa)). The a divalent metal cation site is built by aspartate 25, glutamate 26, and aspartate 121.

The protein belongs to the RNase HII family. The cofactor is Mn(2+). Mg(2+) serves as cofactor.

It localises to the cytoplasm. It catalyses the reaction Endonucleolytic cleavage to 5'-phosphomonoester.. Endonuclease that specifically degrades the RNA of RNA-DNA hybrids. In Synechococcus elongatus (strain ATCC 33912 / PCC 7942 / FACHB-805) (Anacystis nidulans R2), this protein is Ribonuclease HII.